We begin with the raw amino-acid sequence, 625 residues long: Very-long-chain aldehyde decarbonylase CER1 (625 aa).

The next 5 helical transmembrane spans lie at 45-65, 126-146, 177-197, 200-220, and 329-349; these read LGYF…QVWI, GVLM…YWLH, PFAE…TTLL, TASI…NNMG, and LLWP…RLFV. In terms of domain architecture, Fatty acid hydroxylase spans 138–272; it reads VEFLYYWLHK…MPLYDYIYGT (135 aa).

It belongs to the sterol desaturase family. As to quaternary structure, homodimer. Interacts with CER3, CYTB5-B, CYTB5-C, CYTB5-D and CYTB5-E. As to expression, expressed in seedlings, stems, leaves, flowers, fruits and siliques. Not detected in roots, pollen and seeds. Expressed in trichomes, cotyledons, shoot apical meristem and leaf primordia. Preferentially associated with young leaves rather than mature leaves. Expressed in the epidermis of the stem and caulines leaves, in the carpels and the sepals.

It localises to the endoplasmic reticulum membrane. The enzyme catalyses a long-chain fatty aldehyde + 2 NADPH + O2 + H(+) = a long-chain alkane + formate + 2 NADP(+) + H2O. Aldehyde decarbonylase involved in the conversion of aldehydes to alkanes. Core component of a very-long-chain alkane synthesis complex. Involved in epicuticular wax biosynthesis and pollen fertility. In Arabidopsis thaliana (Mouse-ear cress), this protein is Very-long-chain aldehyde decarbonylase CER1 (CER1).